The following is a 417-amino-acid chain: Sterile alpha motif domain-containing protein 14 (417 aa).

The disordered stretch occupies residues 37-306 (LLVKGRRHRP…QETKCSYPYH (270 aa)). Residues 40–49 (KGRRHRPSRS) are compositionally biased toward basic residues. A phosphoserine mark is found at Ser-84 and Ser-108. Positions 138–153 (SGSPPRSAPSSDSSPS) are enriched in low complexity. Residues 159–173 (PRAEPHSEDDSRDAS) show a composition bias toward basic and acidic residues. Residues Ser-173 and Ser-179 each carry the phosphoserine modification. Low complexity-rich tracts occupy residues 244 to 260 (SGKG…PTCS) and 276 to 289 (STLS…SSSP). Ser-279 carries the post-translational modification Phosphoserine. Thr-283 carries the phosphothreonine modification. The SAM domain occupies 326-389 (WTSQQVGQWL…KRKLKELAAA (64 aa)). Residues 375–416 (DRALVKRKLKELAAAAEKERKAQEKTARQREKLRRREHEAKK) are a coiled coil. The segment at 390 to 417 (AEKERKAQEKTARQREKLRRREHEAKKS) is disordered.

This is Sterile alpha motif domain-containing protein 14 (Samd14) from Rattus norvegicus (Rat).